The following is a 516-amino-acid chain: Probable fucosyltransferase 8 (516 aa).

The chain crosses the membrane as a helical; Signal-anchor for type II membrane protein span at residues 5 to 25 (ITVVTCLFLLSVMQLSFFNIF). The Lumenal segment spans residues 26–516 (NYQLLDATTN…ITGLKLVDSN (491 aa)). Residues asparagine 35, asparagine 116, asparagine 211, asparagine 362, and asparagine 463 are each glycosylated (N-linked (GlcNAc...) asparagine).

It belongs to the glycosyltransferase 37 family. As to expression, expressed in leaves and stems.

Its subcellular location is the golgi apparatus. The protein localises to the golgi stack membrane. Its pathway is protein modification; protein glycosylation. May be involved in cell wall biosynthesis. May act as a fucosyltransferase. This Arabidopsis thaliana (Mouse-ear cress) protein is Probable fucosyltransferase 8 (FUT8).